A 166-amino-acid polypeptide reads, in one-letter code: NAD(P)H-quinone oxidoreductase subunit I, chloroplastic (166 aa).

4Fe-4S ferredoxin-type domains are found at residues 55 to 84 (GRIH…VDWK) and 95 to 124 (LNYS…MTEE). [4Fe-4S] cluster contacts are provided by Cys64, Cys67, Cys70, Cys74, Cys104, Cys107, Cys110, and Cys114.

The protein belongs to the complex I 23 kDa subunit family. In terms of assembly, NDH is composed of at least 16 different subunits, 5 of which are encoded in the nucleus. Requires [4Fe-4S] cluster as cofactor.

The protein resides in the plastid. It is found in the chloroplast thylakoid membrane. The enzyme catalyses a plastoquinone + NADH + (n+1) H(+)(in) = a plastoquinol + NAD(+) + n H(+)(out). It carries out the reaction a plastoquinone + NADPH + (n+1) H(+)(in) = a plastoquinol + NADP(+) + n H(+)(out). Its function is as follows. NDH shuttles electrons from NAD(P)H:plastoquinone, via FMN and iron-sulfur (Fe-S) centers, to quinones in the photosynthetic chain and possibly in a chloroplast respiratory chain. The immediate electron acceptor for the enzyme in this species is believed to be plastoquinone. Couples the redox reaction to proton translocation, and thus conserves the redox energy in a proton gradient. The polypeptide is NAD(P)H-quinone oxidoreductase subunit I, chloroplastic (Espeletia timotensis (Andean giant rosette)).